The sequence spans 242 residues: uncharacterized protein (242 aa).

S-adenosyl-L-methionine-binding residues include glycine 198, isoleucine 218, and leucine 227.

This sequence belongs to the class IV-like SAM-binding methyltransferase superfamily. RNA methyltransferase TrmH family.

This is an uncharacterized protein from Mycoplasma pneumoniae (strain ATCC 29342 / M129 / Subtype 1) (Mycoplasmoides pneumoniae).